Consider the following 394-residue polypeptide: Phosphoglycerate kinase (394 aa).

Substrate-binding positions include 21–23, R36, 59–62, R118, and R151; these read DFN and HLGR. S183 carries the phosphoserine modification. Residues K201 and G292 each contribute to the ATP site. Position 299 is a phosphothreonine (T299). Residues E323 and 350–353 each bind ATP; that span reads GGDS.

It belongs to the phosphoglycerate kinase family. As to quaternary structure, monomer.

Its subcellular location is the cytoplasm. It catalyses the reaction (2R)-3-phosphoglycerate + ATP = (2R)-3-phospho-glyceroyl phosphate + ADP. The protein operates within carbohydrate degradation; glycolysis; pyruvate from D-glyceraldehyde 3-phosphate: step 2/5. In Priestia megaterium (strain DSM 319 / IMG 1521) (Bacillus megaterium), this protein is Phosphoglycerate kinase (pgk).